The primary structure comprises 146 residues: Cyanate hydratase (146 aa).

Residues Arg-87, Glu-90, and Ser-113 contribute to the active site.

The protein belongs to the cyanase family.

It catalyses the reaction cyanate + hydrogencarbonate + 3 H(+) = NH4(+) + 2 CO2. Functionally, catalyzes the reaction of cyanate with bicarbonate to produce ammonia and carbon dioxide. In Synechococcus elongatus (strain ATCC 33912 / PCC 7942 / FACHB-805) (Anacystis nidulans R2), this protein is Cyanate hydratase.